The sequence spans 279 residues: uncharacterized protein (279 aa).

To M.tuberculosis Rv2569c.

This is an uncharacterized protein from Mycobacterium leprae (strain TN).